The primary structure comprises 623 residues: Prothrombin (623 aa).

An N-terminal signal peptide occupies residues 1–24 (MAHVRGLQLPGCLALAALCTLVHS). Residues 25-43 (QHVFLAPQQALSLLQRVRR) constitute a propeptide that is removed on maturation. One can recognise a Gla domain in the interval 44 to 90 (ANSVFLEEVRKGNLERECVEETCSYEEAFEALESSTATDVFWAKYTA). A 4-carboxyglutamate mark is found at Glu-50, Glu-51, Glu-58, Glu-60, Glu-63, Glu-64, Glu-69, Glu-70, Glu-73, and Glu-76. An intrachain disulfide couples Cys-61 to Cys-66. Intrachain disulfides connect Cys-91–Cys-104, Cys-109–Cys-187, Cys-130–Cys-170, Cys-158–Cys-182, Cys-214–Cys-292, Cys-235–Cys-275, Cys-263–Cys-287, Cys-337–Cys-483, Cys-392–Cys-408, Cys-537–Cys-551, and Cys-565–Cys-595. Kringle domains are found at residues 108–187 (NCAE…IPVC) and 213–292 (QCVP…LNYC). Asn-122 and Asn-144 each carry an N-linked (GlcNAc...) asparagine glycan. One can recognise a Peptidase S1 domain in the interval 365 to 619 (IVEGSDAEIG…LKKWIQKVID (255 aa)). His-407 serves as the catalytic Charge relay system. A glycan (N-linked (GlcNAc...) asparagine) is linked at Asn-417. Asp-463 serves as the catalytic Charge relay system. The tract at residues 552-574 (AGYKPDEGKRGDACEGDSGGPFV) is high affinity receptor-binding region which also known as the TP508 peptide. The active-site Charge relay system is Ser-569.

It belongs to the peptidase S1 family. As to quaternary structure, heterodimer (named alpha-thrombin) of a light and a heavy chain; disulfide-linked. Forms a heterodimer with SERPINA5. In plasma, interacts (via N-terminus) with alpha-1-microglobulin; this interaction does not prevent the activation of prothrombin to thrombin. Post-translationally, the gamma-carboxyglutamyl residues, which bind calcium ions, result from the carboxylation of glutamyl residues by a microsomal enzyme, the vitamin K-dependent carboxylase. The modified residues are necessary for the calcium-dependent interaction with a negatively charged phospholipid surface, which is essential for the conversion of prothrombin to thrombin. In the penultimate step of the coagulation cascade, prothrombin is converted to thrombin by the prothrombinase complex composed of factor Xa (F10), cofactor Va (F5), and phospholipids. This activation requires factor Xa-catalyzed sequential cleavage at 2 sites, Arg-315 and Arg-364, along 2 possible pathways. In the first pathway, the first cleavage occurs at Arg-315, leading to the formation of the inactive intermediate prethrombin-2. This pathway preferentially occurs on platelets and in the absence of cofactor Va. In the second pathway, the first cleavage occurs at Arg-364, which separates protease domain into 2 chains that remain connected through a disulfide bond and generates the active intermediate meizothrombin. The presence of cofactor Va directs activation along the meizothrombin pathway and greatly accelerates the rate of cleavage at Arg-364, but has a smaller effect on the cleavage of meizothrombin at Arg-315. Meizothrombin accumulates as an intermediate when prothrombinase is assembled on the membrane of red blood cells.

The enzyme catalyses Selective cleavage of Arg-|-Gly bonds in fibrinogen to form fibrin and release fibrinopeptides A and B.. With respect to regulation, activity is promoted in the presence of negatively charged surfaces, such as polyphosphate and dextran sulfate. Inhibited by SERPINA5. Functionally, thrombin, which cleaves bonds after Arg and Lys, converts fibrinogen to fibrin and activates factors V, VII, VIII, XIII, and, in complex with thrombomodulin, protein C. Functions in blood homeostasis, inflammation and wound healing. Activates coagulation factor XI (F11); activation is promoted by the contact with negatively charged surfaces. Triggers the production of pro-inflammatory cytokines, such as MCP-1/CCL2 and IL8/CXCL8, in endothelial cells. The polypeptide is Prothrombin (F2) (Pongo abelii (Sumatran orangutan)).